The primary structure comprises 298 residues: WRKY transcription factor 22 (298 aa).

Disordered stretches follow at residues 75–116 (EEPR…IQHK) and 181–220 (AEHNHPAPTHRNSLAGSTRQKPSDQQTSKSPTTTIATYSS). Residues 88 to 103 (SLSASSGSVTSKPSGS) show a composition bias toward low complexity. A compositionally biased stretch (basic residues) spans 107–116 (RSKRRKIQHK). The segment at residues 122–188 (AAEALNSDVW…YTAEHNHPAP (67 aa)) is a DNA-binding region (WRKY). A compositionally biased stretch (polar residues) spans 190–220 (HRNSLAGSTRQKPSDQQTSKSPTTTIATYSS).

The protein belongs to the WRKY group II-e family.

It is found in the nucleus. In terms of biological role, transcription factor involved in the expression of defense genes in innate immune response of plants. Interacts specifically with the W box (5'-(T)TGAC[CT]-3'), a frequently occurring elicitor-responsive cis-acting element. Activates WRKY 29, SIRK and its own promoters. The sequence is that of WRKY transcription factor 22 (WRKY22) from Arabidopsis thaliana (Mouse-ear cress).